The sequence spans 467 residues: Glycosyl hydrolase family 109 protein 1 (467 aa).

Positions 1 to 22 (MKKLLLNTLIGLALLTCQTSFA) are cleaved as a signal peptide. Residues 66–67 (MR), aspartate 88, 137–140 (WKHH), 157–158 (EV), and asparagine 186 each bind NAD(+). Residues tyrosine 215, arginine 231, 243–246 (YATH), and tyrosine 321 contribute to the substrate site. Residue tyrosine 243 coordinates NAD(+).

The protein belongs to the Gfo/Idh/MocA family. Glycosyl hydrolase 109 subfamily. The cofactor is NAD(+).

In terms of biological role, glycosidase. This is Glycosyl hydrolase family 109 protein 1 from Bacteroides thetaiotaomicron (strain ATCC 29148 / DSM 2079 / JCM 5827 / CCUG 10774 / NCTC 10582 / VPI-5482 / E50).